The sequence spans 192 residues: dTTP/UTP pyrophosphatase (192 aa).

The active-site Proton acceptor is the Asp72.

This sequence belongs to the Maf family. YhdE subfamily. Requires a divalent metal cation as cofactor.

The protein localises to the cytoplasm. The enzyme catalyses dTTP + H2O = dTMP + diphosphate + H(+). The catalysed reaction is UTP + H2O = UMP + diphosphate + H(+). In terms of biological role, nucleoside triphosphate pyrophosphatase that hydrolyzes dTTP and UTP. May have a dual role in cell division arrest and in preventing the incorporation of modified nucleotides into cellular nucleic acids. The chain is dTTP/UTP pyrophosphatase from Geobacter metallireducens (strain ATCC 53774 / DSM 7210 / GS-15).